The following is a 155-amino-acid chain: 2-C-methyl-D-erythritol 2,4-cyclodiphosphate synthase (155 aa).

A divalent metal cation is bound by residues D8 and H10. 4-CDP-2-C-methyl-D-erythritol 2-phosphate is bound by residues 8-10 (DVH) and 34-35 (HS). Residue H42 coordinates a divalent metal cation. Residues 56–58 (DIG), 61–65 (FPDTD), 100–106 (AQAPKMA), 132–135 (TTTE), F139, and R142 each bind 4-CDP-2-C-methyl-D-erythritol 2-phosphate.

Belongs to the IspF family. As to quaternary structure, homotrimer. It depends on a divalent metal cation as a cofactor.

The catalysed reaction is 4-CDP-2-C-methyl-D-erythritol 2-phosphate = 2-C-methyl-D-erythritol 2,4-cyclic diphosphate + CMP. The protein operates within isoprenoid biosynthesis; isopentenyl diphosphate biosynthesis via DXP pathway; isopentenyl diphosphate from 1-deoxy-D-xylulose 5-phosphate: step 4/6. Its function is as follows. Involved in the biosynthesis of isopentenyl diphosphate (IPP) and dimethylallyl diphosphate (DMAPP), two major building blocks of isoprenoid compounds. Catalyzes the conversion of 4-diphosphocytidyl-2-C-methyl-D-erythritol 2-phosphate (CDP-ME2P) to 2-C-methyl-D-erythritol 2,4-cyclodiphosphate (ME-CPP) with a corresponding release of cytidine 5-monophosphate (CMP). This Saccharophagus degradans (strain 2-40 / ATCC 43961 / DSM 17024) protein is 2-C-methyl-D-erythritol 2,4-cyclodiphosphate synthase.